We begin with the raw amino-acid sequence, 568 residues long: MPHAPARSGDAMSAAAPPCCTSLLGLSLSMFVAPCALAATPLEGAVVSAPAPTPPTPDLAYPELFQAVQRGELFDDQKHFVDFLPLRDPALINADYLAQHEHAGFDLRKFVDANFEESPPVQTDAIRQDTALREHIDALWPKLVRSQTNVPAHSSLLALPHPYVVPGGRFREVYYWDSYFTMLGLVKSGETTLSRQMLDNFAYLIDTYGHIPNGNRTYYLSRSQPPLFSYMVELQAGVEGEAVYQRYLPQLQKEYAYWMQGGDDLQPGQAARHVVRLADGSVLNRYWDERDTPRPEAWLHDTRTAAEAHDRPAADVYRDLRAGAESGWDYTSRWLADGKTLSTIRTTAIVPIDLNSLLYHLERTLAQACAHTGTACSQDYAALAQQRKQAIDAHLWNAAGYYADYDWQTRTLSNQVTAAALYPLFAGLASDDHAKRTATSVRARLLRPGGLATTALKTGQQWDEPNGWAPLQWVAVDGLRRYGEDGLARTIGERFLTQVQALFAREHKLVEKYGLDADAAGGGGGEYALQDGFGWTNGVTLMLLNLYPSQGATQAPAKTKRKPEPAAP.

Residues 1–38 (MPHAPARSGDAMSAAAPPCCTSLLGLSLSMFVAPCALA) form the signal peptide. Residues Arg-169, 176–177 (WD), Asn-213, 222–224 (RSQ), 294–296 (RPE), and Gly-327 contribute to the substrate site. Catalysis depends on proton donor/acceptor residues Asp-329 and Glu-511. Glu-526 is a binding site for substrate.

The protein belongs to the glycosyl hydrolase 37 family.

The protein localises to the periplasm. The enzyme catalyses alpha,alpha-trehalose + H2O = alpha-D-glucose + beta-D-glucose. Functionally, provides the cells with the ability to utilize trehalose at high osmolarity by splitting it into glucose molecules that can subsequently be taken up by the phosphotransferase-mediated uptake system. The protein is Periplasmic trehalase of Xanthomonas campestris pv. campestris (strain 8004).